The primary structure comprises 309 residues: MRKIIVGSRKSKLALTQTNWFIDQLKALGLPYEFEVKEIVTKGDVILDVTLSKVGGKGLFVKEIEHALLTKEIDMAVHSMKDMPAVLPEGLMIGCTPKRVDPRDAFISKNGASFKELAEGAILGTSSLRRSAQLLAARPDLQVKWIRGNIDTRLRKLKEEDYDAIILATAGLQRMGWDNEVITEHLDETLCVPAVGQGALAIECREDDKDLLQLLAHMNDGVTEKTVAAERVFLHKLEGGCQVPIAGYATLTENDAIELTALVGSMDGSVLLKEKVVGTDPEKVGLEAADRLINQGAKELILAANKEQQ.

Cysteine 241 carries the post-translational modification S-(dipyrrolylmethanemethyl)cysteine.

Belongs to the HMBS family. In terms of assembly, monomer. Requires dipyrromethane as cofactor.

The enzyme catalyses 4 porphobilinogen + H2O = hydroxymethylbilane + 4 NH4(+). Its pathway is porphyrin-containing compound metabolism; protoporphyrin-IX biosynthesis; coproporphyrinogen-III from 5-aminolevulinate: step 2/4. Functionally, tetrapolymerization of the monopyrrole PBG into the hydroxymethylbilane pre-uroporphyrinogen in several discrete steps. The sequence is that of Porphobilinogen deaminase from Bacillus cereus (strain AH187).